Reading from the N-terminus, the 307-residue chain is High-affinity branched-chain amino acid transport system permease protein BraD (307 aa).

10 consecutive transmembrane segments (helical) span residues 21–41 (YALI…INFA), 45–65 (VYMI…MMGL), 70–90 (LMML…GYSI), 104–124 (LIPL…VMLS), 132–152 (IPTL…GVVI), 154–174 (YMQI…TLFI), 203–223 (IIAL…VLLG), 224–244 (MQYG…AFTA), 245–265 (AVLG…LLGV), and 280–300 (DVVA…GILG).

This sequence belongs to the binding-protein-dependent transport system permease family. LivHM subfamily.

Its subcellular location is the cell inner membrane. In terms of biological role, component of the high affinity leucine, isoleucine, valine, transport system (LIV-I), which is operative without Na(+) and is specific for alanine and threonine, in addition to branched-chain amino acids. The protein is High-affinity branched-chain amino acid transport system permease protein BraD (braD) of Pseudomonas aeruginosa (strain ATCC 15692 / DSM 22644 / CIP 104116 / JCM 14847 / LMG 12228 / 1C / PRS 101 / PAO1).